The following is a 198-amino-acid chain: MVKCKLFFWLISWFLKVKNGEKVWKFLKSCPENCYSEPQFAFIGRSNVGKSTLINALANKKIAKTSTKPGRTQLLNFYKNESEKLFVDLPGYGYAAVSKTKKHQIDRIIAGYFQKDQPISAVFLILDARVGFTNLDYIMIEYIIQQGFKLHILANKIDKTNQSTRAILLNQCKKLKLNCLLISAKNKNNLSKLQELLE.

An EngB-type G domain is found at 36 to 198; it reads SEPQFAFIGR…NLSKLQELLE (163 aa). GTP-binding positions include 44–51, 70–74, 88–91, 155–158, and 182–184; these read GRSNVGKS, GRTQL, DLPG, NKID, and ISA. Positions 51 and 72 each coordinate Mg(2+).

The protein belongs to the TRAFAC class TrmE-Era-EngA-EngB-Septin-like GTPase superfamily. EngB GTPase family. The cofactor is Mg(2+).

Functionally, necessary for normal cell division and for the maintenance of normal septation. The chain is Probable GTP-binding protein EngB from Mesomycoplasma hyopneumoniae (strain 232) (Mycoplasma hyopneumoniae).